Consider the following 347-residue polypeptide: UDP-N-acetylenolpyruvoylglucosamine reductase (347 aa).

The region spanning 27 to 197 is the FAD-binding PCMH-type domain; that stretch reads LPARAQRLAR…TGIELRLNKM (171 aa). Arg173 is a catalytic residue. The active-site Proton donor is Ser247. Glu342 is a catalytic residue.

The protein belongs to the MurB family. It depends on FAD as a cofactor.

It is found in the cytoplasm. The enzyme catalyses UDP-N-acetyl-alpha-D-muramate + NADP(+) = UDP-N-acetyl-3-O-(1-carboxyvinyl)-alpha-D-glucosamine + NADPH + H(+). It functions in the pathway cell wall biogenesis; peptidoglycan biosynthesis. Cell wall formation. The sequence is that of UDP-N-acetylenolpyruvoylglucosamine reductase from Alcanivorax borkumensis (strain ATCC 700651 / DSM 11573 / NCIMB 13689 / SK2).